The following is a 119-amino-acid chain: Large ribosomal subunit protein bL20c (119 aa).

It belongs to the bacterial ribosomal protein bL20 family.

The protein localises to the plastid. Its subcellular location is the chloroplast. In terms of biological role, binds directly to 23S ribosomal RNA and is necessary for the in vitro assembly process of the 50S ribosomal subunit. It is not involved in the protein synthesizing functions of that subunit. The chain is Large ribosomal subunit protein bL20c (rpl20) from Pinus thunbergii (Japanese black pine).